Here is a 697-residue protein sequence, read N- to C-terminus: PHD finger protein At2g01810 (697 aa).

2 disordered regions span residues 319–362 and 457–478; these read DENS…QYYS and EQKRKKKRKVKPQETSECTSTT. The span at 339–349 shows a compositional bias: basic and acidic residues; it reads SGRDTVLDDHN. The PHD-type zinc finger occupies 635–685; sequence TVDCKCGARDDDGERMVACDACKVWHHTLCNSIEDDEAVPSVFLCNMCYGD.

The protein localises to the nucleus. This chain is PHD finger protein At2g01810, found in Arabidopsis thaliana (Mouse-ear cress).